A 325-amino-acid chain; its full sequence is Thiamine-monophosphate kinase (325 aa).

Mg(2+)-binding residues include Asp27 and Asp44. His51 is a binding site for substrate. Residue Asp73 coordinates Mg(2+). Residues Tyr103, 120–121 (GD), and Arg147 contribute to the ATP site. Asp121 serves as a coordination point for Mg(2+). Asp215 lines the Mg(2+) pocket. Ser217 lines the ATP pocket. Asp218 lines the Mg(2+) pocket. Substrate is bound by residues Glu264 and Tyr321.

This sequence belongs to the thiamine-monophosphate kinase family.

The enzyme catalyses thiamine phosphate + ATP = thiamine diphosphate + ADP. Its pathway is cofactor biosynthesis; thiamine diphosphate biosynthesis; thiamine diphosphate from thiamine phosphate: step 1/1. In terms of biological role, catalyzes the ATP-dependent phosphorylation of thiamine-monophosphate (TMP) to form thiamine-pyrophosphate (TPP), the active form of vitamin B1. The sequence is that of Thiamine-monophosphate kinase from Bacillus subtilis (strain 168).